Reading from the N-terminus, the 480-residue chain is Sestrin-2 (480 aa).

M1 carries the post-translational modification N-acetylmethionine. The tract at residues 20 to 45 is disordered; it reads PGGVGDSGPGEEQRESRARRGPRGPS. The N-terminal domain; mediates the alkylhydroperoxide reductase activity stretch occupies residues 66–239; that stretch reads GLEALMSSGR…APTPPSEQSS (174 aa). C125 (cysteine sulfenic acid (-SOH) intermediate) is an active-site residue. A Glycyl lysine isopeptide (Lys-Gly) (interchain with G-Cter in ubiquitin) cross-link involves residue K175. Disordered stretches follow at residues 222-252 and 272-291; these read ADGS…SGGF and LLRD…ELEK. Position 249 is a phosphoserine (S249). The interval 308 to 480 is C-terminal domain; mediates TORC1 regulation; it reads PHPDMLCFVE…ALRAITRYMT (173 aa). L-leucine-binding positions include 374-377, T386, and E451; that span reads TYNT.

This sequence belongs to the sestrin family. As to quaternary structure, interacts with the GATOR2 complex which is composed of MIOS, SEC13, SEH1L, WDR24 and WDR59; the interaction is negatively regulated by leucine. Conveys leucine availability via direct interaction with SEH1L and WDR24 components of the GATOR2 complex. Interacts with RRAGA, RRAGB, RRAGC and RRAGD; may function as a guanine nucleotide dissociation inhibitor for RRAGs and regulate them. May interact with the TORC2 complex. Interacts with KEAP1, RBX1, SQSTM and ULK1; to regulate the degradation of KEAP1. May also associate with the complex composed of TSC1, TSC2 and the AMP-responsive protein kinase/AMPK to regulate TORC1 signaling. May interact with PRDX1. In terms of processing, phosphorylated by ULK1 at multiple sites. Post-translationally, ubiquitinated at Lys-175 by RNF167 via 'Lys-63'-linked polyubiquitination in response to leucine deprivation: ubiquitination promotes SESN2-interaction with the GATOR2 complex, leading to inhibit the TORC1 signaling pathway. Deubiquitinated at Lys-175 by STAMBPL1, promoting the TORC1 signaling pathway. Ubiquitinated by RNF186; ubiquitination mediates proteasomal degradation. In terms of tissue distribution, widely expressed.

The protein resides in the cytoplasm. It catalyses the reaction a hydroperoxide + L-cysteinyl-[protein] = S-hydroxy-L-cysteinyl-[protein] + an alcohol. In terms of biological role, functions as an intracellular leucine sensor that negatively regulates the mTORC1 signaling pathway through the GATOR complex. In absence of leucine, binds the GATOR subcomplex GATOR2 and prevents mTORC1 signaling. Binding of leucine to SESN2 disrupts its interaction with GATOR2 thereby activating the TORC1 signaling pathway. This stress-inducible metabolic regulator also plays a role in protection against oxidative and genotoxic stresses. May negatively regulate protein translation in response to endoplasmic reticulum stress, via mTORC1. May positively regulate the transcription by NFE2L2 of genes involved in the response to oxidative stress by facilitating the SQSTM1-mediated autophagic degradation of KEAP1. May also mediate TP53 inhibition of TORC1 signaling upon genotoxic stress. Moreover, may prevent the accumulation of reactive oxygen species (ROS) through the alkylhydroperoxide reductase activity born by the N-terminal domain of the protein. Was originally reported to contribute to oxidative stress resistance by reducing PRDX1. However, this could not be confirmed. This is Sestrin-2 from Homo sapiens (Human).